We begin with the raw amino-acid sequence, 253 residues long: MTNQKKFKRQETQIWQHLQWEPSPQQLEQFNQLQYLLREWNQKINLTRLIEGNDFWISQILDSLWPIQDELKFQDKQINIIDVGTGCGLPGLAVAIALPRSSTTLIDSIYRKTSAVKEIVKELGLLSRVNVLTERIELTGQKKLHRHTFDLAIARAVAKAPVLAEYLIPFLKPTGQAVMYKGKWNDLEKKELLKALSKLKGKIDTTKSLELPERRGIRHAIRISSTMLCPGKYPRSVGIPLKRPLNNQTSDNL.

Residues glycine 84, leucine 89, 136–137, and arginine 155 each bind S-adenosyl-L-methionine; that span reads IE.

Belongs to the methyltransferase superfamily. RNA methyltransferase RsmG family.

The protein resides in the cytoplasm. Functionally, specifically methylates the N7 position of a guanine in 16S rRNA. This chain is Ribosomal RNA small subunit methyltransferase G, found in Prochlorococcus marinus (strain SARG / CCMP1375 / SS120).